The following is a 480-amino-acid chain: Glutamate--tRNA ligase (480 aa).

The 'HIGH' region signature appears at 9-19 (PSPTGNLHIGT). The 'KMSKS' region motif lies at 247-251 (KLSKR). ATP is bound at residue lysine 250.

The protein belongs to the class-I aminoacyl-tRNA synthetase family. Glutamate--tRNA ligase type 1 subfamily. In terms of assembly, monomer.

The protein localises to the cytoplasm. It carries out the reaction tRNA(Glu) + L-glutamate + ATP = L-glutamyl-tRNA(Glu) + AMP + diphosphate. Functionally, catalyzes the attachment of glutamate to tRNA(Glu) in a two-step reaction: glutamate is first activated by ATP to form Glu-AMP and then transferred to the acceptor end of tRNA(Glu). This chain is Glutamate--tRNA ligase, found in Nostoc sp. (strain PCC 7120 / SAG 25.82 / UTEX 2576).